A 918-amino-acid chain; its full sequence is DNA mismatch repair protein MutS (918 aa).

662–669 (GPNMAGKS) serves as a coordination point for ATP.

This sequence belongs to the DNA mismatch repair MutS family.

Its function is as follows. This protein is involved in the repair of mismatches in DNA. It is possible that it carries out the mismatch recognition step. This protein has a weak ATPase activity. The protein is DNA mismatch repair protein MutS of Sorangium cellulosum (strain So ce56) (Polyangium cellulosum (strain So ce56)).